The primary structure comprises 278 residues: Beta-lactamase-like protein str5 (278 aa).

The chain crosses the membrane as a helical span at residues 20 to 37 (VFVLAALLSATFAFFTHT). N-linked (GlcNAc...) asparagine glycosylation occurs at N112.

Belongs to the beta-lactamase family.

It localises to the membrane. It participates in mycotoxin biosynthesis. In terms of biological role, beta-lactamase-like protein; part of the gene cluster that mediates the biosynthesis of strobilurin A, an antifungal polyketide that contains a key beta-methoxyacrylate toxophore that targets the complex III of the mitochondrial electron transport chain. Strobilurin biosynthesis begins with construction of benzoyl CoA by step-wise elimination of ammonia from phenylalanine by the phenylalanine ammonia-lyase str11, oxygenation by str8 and retro-Claisen reaction to form benzoic acid, which is activated to its CoA thiolester benzoyl CoA by the dedicated CoA ligase str10. Benzoyl CoA forms the starter unit for the highly reducing polyketide synthase stpks1 that produces the polyketide prestrobilutin A. The FAD-dependent oxygenase str9 then catalyzes the key oxidative rearrangement responsible for the creation of the beta-methoxyacrylate toxophore. Str9 performs epoxidation of the 2,3 olefin of prestrobilutin A, followed by Meinwald rearrangement to furnish the aldehyde intermediate. Rapid enolization of the aldehyde intermediate would give the beta-methoxyacrylate skeleton and methylations catalyzed by str2 and str3 complete the synthesis and lead to the production of strobilurin A. The short-chain dehydrogenase stl2 and the dehydrogenase str4 play a role in the shunt pathway leading to the production of bolineol. The cluster encodes no obvious halogenase gene that could be involved in production of strobilurin B, nor any obvious dimethylallyl-transferase that could be involved in the production of strobilurin G. It is possible that unknown proteins encoded in, or near, the cluster (such as str1 or stl1) may form new classes of halogenases or dimethylally-transferases, or that the responsible genes are located elsewhere on the genome. Similarly, proteins encoded by str5/str6 hydrolases appear to have no chemical role in the biosynthesis of strobilurin A. Finally, no obvious self-resistance gene is found within the cluster. This chain is Beta-lactamase-like protein str5, found in Strobilurus tenacellus.